The sequence spans 337 residues: tRNA N6-adenosine threonylcarbamoyltransferase (337 aa).

Fe cation is bound by residues His-111 and His-115. Substrate-binding positions include 134–138 (LVSGG), Asp-167, Gly-180, and Asn-272. Position 300 (Asp-300) interacts with Fe cation.

Belongs to the KAE1 / TsaD family. Requires Fe(2+) as cofactor.

The protein localises to the cytoplasm. It catalyses the reaction L-threonylcarbamoyladenylate + adenosine(37) in tRNA = N(6)-L-threonylcarbamoyladenosine(37) in tRNA + AMP + H(+). Functionally, required for the formation of a threonylcarbamoyl group on adenosine at position 37 (t(6)A37) in tRNAs that read codons beginning with adenine. Is involved in the transfer of the threonylcarbamoyl moiety of threonylcarbamoyl-AMP (TC-AMP) to the N6 group of A37, together with TsaE and TsaB. TsaD likely plays a direct catalytic role in this reaction. The protein is tRNA N6-adenosine threonylcarbamoyltransferase of Escherichia coli O139:H28 (strain E24377A / ETEC).